We begin with the raw amino-acid sequence, 357 residues long: MALQKVDISLSTEQLLQAQVHVWNHMYAFANSMSLKCAIQLGIPDILHKHGRPMTLSQLLQSIPINKEKTQCFQRLMRALVNSNFFIEENNSNNQEVCYWLTPASCLLLKEAPLTVTPLVQVVLDPTFTNPWHHMSEWFTHEKHATQFEAANGCTFWEKLANEPSKGRFFDEAMSCDSRLIAHVFTKDYKHVIEGIRTLVDVGGGNGTMAKAIVEAMPTIKCTVIDLPHVVAGLESTDNLNYIGGDMFQSIPSADAILLKSIIHDWDDVEGLKILKKCKDAVVMGGKVIIIDVVVGVNHDIDEVLEDQLHFDMAMMCYFNAKERTMSEWEKLIYDAGFKSYKLTPAFGVRSLIEAYP.

S-adenosyl-L-methionine is bound by residues Gly203, Asp226, Asp246, Met247, and Lys260. The active-site Proton acceptor is His264.

The protein belongs to the class I-like SAM-binding methyltransferase superfamily. Cation-independent O-methyltransferase family. COMT subfamily. In terms of tissue distribution, specifically expressed in the peltate glandular trichomes on the surface of the young basil leaves.

The enzyme catalyses (E)-isoeugenol + S-adenosyl-L-methionine = (E)-isomethyleugenol + S-adenosyl-L-homocysteine + H(+). The protein operates within aromatic compound metabolism; phenylpropanoid biosynthesis. Its function is as follows. Phenylpropene O-methyltransferase that catalyzes the methylation of the para-4-hydroxyl of eugenol to methyleugenol. Can also convert chavicol to methylchavicol but with less affinity. The polypeptide is Eugenol O-methyltransferase (EOMT1) (Ocimum basilicum (Sweet basil)).